Consider the following 243-residue polypeptide: Type III pantothenate kinase (243 aa).

ATP is bound at residue 7–14 (DLGNSRFK). Substrate is bound by residues Tyr91 and 98–101 (GVDR). Residue Asp100 is the Proton acceptor of the active site. Thr122 contacts ATP. Thr172 contributes to the substrate binding site.

This sequence belongs to the type III pantothenate kinase family. In terms of assembly, homodimer. It depends on NH4(+) as a cofactor. Requires K(+) as cofactor.

Its subcellular location is the cytoplasm. It carries out the reaction (R)-pantothenate + ATP = (R)-4'-phosphopantothenate + ADP + H(+). It participates in cofactor biosynthesis; coenzyme A biosynthesis; CoA from (R)-pantothenate: step 1/5. Catalyzes the phosphorylation of pantothenate (Pan), the first step in CoA biosynthesis. The sequence is that of Type III pantothenate kinase from Stenotrophomonas maltophilia (strain R551-3).